The following is a 424-amino-acid chain: Histidine--tRNA ligase (424 aa).

The protein belongs to the class-II aminoacyl-tRNA synthetase family. Homodimer.

The protein resides in the cytoplasm. It carries out the reaction tRNA(His) + L-histidine + ATP = L-histidyl-tRNA(His) + AMP + diphosphate + H(+). The chain is Histidine--tRNA ligase from Pectobacterium carotovorum subsp. carotovorum (strain PC1).